The chain runs to 126 residues: MLKITKICLASSATSTAQRSIALTAPRAIDQKWRAAKGLPENPNAFGPLTNLPDYTYLDGRPTPLGANQKRRLIKQQEIATRIVELSGELEFAKQRHERLKANAESEKQRLIRSKLKPKGHFLLKK.

The transit peptide at 1-28 directs the protein to the mitochondrion; that stretch reads MLKITKICLASSATSTAQRSIALTAPRA.

It belongs to the mitochondrion-specific ribosomal protein mL52 family. As to quaternary structure, component of the mitochondrial ribosome large subunit (39S) which comprises a 16S rRNA and about 50 distinct proteins.

The protein localises to the mitochondrion. This is Large ribosomal subunit protein mL52 (mRpL52) from Drosophila melanogaster (Fruit fly).